A 325-amino-acid chain; its full sequence is Glutarate 2-hydroxylase (325 aa).

Residues H160, D162, and H292 each contribute to the Fe cation site.

It belongs to the glutarate hydroxylase family. Homotetramer. Requires Fe(2+) as cofactor.

The enzyme catalyses glutarate + 2-oxoglutarate + O2 = (S)-2-hydroxyglutarate + succinate + CO2. It functions in the pathway amino-acid degradation. Functionally, acts as an alpha-ketoglutarate-dependent dioxygenase catalyzing hydroxylation of glutarate (GA) to L-2-hydroxyglutarate (L2HG). Functions in a L-lysine degradation pathway that proceeds via cadaverine, glutarate and L-2-hydroxyglutarate. The protein is Glutarate 2-hydroxylase of Pseudomonas putida (strain ATCC 700007 / DSM 6899 / JCM 31910 / BCRC 17059 / LMG 24140 / F1).